Consider the following 639-residue polypeptide: Elongation factor 4 (639 aa).

The tr-type G domain maps to 39–221 (TMIRNFCIIA…EIVRRVPAPV (183 aa)). Residues 51–56 (DHGKST) and 168–171 (NKID) each bind GTP.

The protein belongs to the TRAFAC class translation factor GTPase superfamily. Classic translation factor GTPase family. LepA subfamily.

It is found in the cell membrane. It carries out the reaction GTP + H2O = GDP + phosphate + H(+). Its function is as follows. Required for accurate and efficient protein synthesis under certain stress conditions. May act as a fidelity factor of the translation reaction, by catalyzing a one-codon backward translocation of tRNAs on improperly translocated ribosomes. Back-translocation proceeds from a post-translocation (POST) complex to a pre-translocation (PRE) complex, thus giving elongation factor G a second chance to translocate the tRNAs correctly. Binds to ribosomes in a GTP-dependent manner. The protein is Elongation factor 4 of Frankia casuarinae (strain DSM 45818 / CECT 9043 / HFP020203 / CcI3).